The sequence spans 338 residues: MIEADRLMSAAAVTGEEVIDRAIRPKKLEDYIGQPHVLEQMEIFIQAAKMRGDALDHLLISGPPGLGKTTLANIVANEMGVNLRTTSGPVLEKAGDLAAMLTSLEPHDVLFIDEIHRLSPVVEEVLYPAMEDYQLDIMIGEGPAGRSIKIELPPFTLVGATTRAGSLTPPLRDRFGIVQRLEFYQTGDLQHIVSRSAVCLALNITEGGAREIARRARGTPRIANRLLRRVRDFAEVRAAGHITDDVAVSALNMLNVDTEGFDFMDRKLLLAIIDKFVGGPVGLDNLAAAIGEERETIEDVLEPFLIQQGFIQRTPRGRIATVHAYRHFGLEEHGGDPE.

The segment at 4-184 (ADRLMSAAAV…FGIVQRLEFY (181 aa)) is large ATPase domain (RuvB-L). Residues Ile-23, Arg-24, Gly-65, Lys-68, Thr-69, Thr-70, 131–133 (EDY), Arg-174, Tyr-184, and Arg-221 each bind ATP. Mg(2+) is bound at residue Thr-69. The tract at residues 185–255 (QTGDLQHIVS…VAVSALNMLN (71 aa)) is small ATPAse domain (RuvB-S). The segment at 258–338 (TEGFDFMDRK…GLEEHGGDPE (81 aa)) is head domain (RuvB-H). The DNA site is built by Arg-294, Arg-313, and Arg-318.

The protein belongs to the RuvB family. In terms of assembly, homohexamer. Forms an RuvA(8)-RuvB(12)-Holliday junction (HJ) complex. HJ DNA is sandwiched between 2 RuvA tetramers; dsDNA enters through RuvA and exits via RuvB. An RuvB hexamer assembles on each DNA strand where it exits the tetramer. Each RuvB hexamer is contacted by two RuvA subunits (via domain III) on 2 adjacent RuvB subunits; this complex drives branch migration. In the full resolvosome a probable DNA-RuvA(4)-RuvB(12)-RuvC(2) complex forms which resolves the HJ.

The protein localises to the cytoplasm. It catalyses the reaction ATP + H2O = ADP + phosphate + H(+). Functionally, the RuvA-RuvB-RuvC complex processes Holliday junction (HJ) DNA during genetic recombination and DNA repair, while the RuvA-RuvB complex plays an important role in the rescue of blocked DNA replication forks via replication fork reversal (RFR). RuvA specifically binds to HJ cruciform DNA, conferring on it an open structure. The RuvB hexamer acts as an ATP-dependent pump, pulling dsDNA into and through the RuvAB complex. RuvB forms 2 homohexamers on either side of HJ DNA bound by 1 or 2 RuvA tetramers; 4 subunits per hexamer contact DNA at a time. Coordinated motions by a converter formed by DNA-disengaged RuvB subunits stimulates ATP hydrolysis and nucleotide exchange. Immobilization of the converter enables RuvB to convert the ATP-contained energy into a lever motion, pulling 2 nucleotides of DNA out of the RuvA tetramer per ATP hydrolyzed, thus driving DNA branch migration. The RuvB motors rotate together with the DNA substrate, which together with the progressing nucleotide cycle form the mechanistic basis for DNA recombination by continuous HJ branch migration. Branch migration allows RuvC to scan DNA until it finds its consensus sequence, where it cleaves and resolves cruciform DNA. This chain is Holliday junction branch migration complex subunit RuvB, found in Sodalis glossinidius (strain morsitans).